Consider the following 98-residue polypeptide: Bombyxin E-1 (98 aa).

Positions 1-19 are cleaved as a signal peptide; that stretch reads MNRPVFLVLLLTGFLCIAA. Position 20 is a pyrrolidone carboxylic acid (glutamine 20). Intrachain disulfides connect cysteine 29–cysteine 85, cysteine 41–cysteine 98, and cysteine 84–cysteine 89. A propeptide spans 50 to 75 (c peptide like); the sequence is SESSLASYSSRGWPWLPTPNFNKRAI.

Belongs to the insulin family. As to quaternary structure, heterodimer of a B chain and an A chain linked by two disulfide bonds.

Its subcellular location is the secreted. Functionally, PTTH is a brain peptide responsible for activation of prothoracic glands to produce ecdysone in insects. The polypeptide is Bombyxin E-1 (BBXE1) (Bombyx mori (Silk moth)).